The chain runs to 721 residues: Transcription activator of gluconeogenesis ARB_05058 (721 aa).

Over residues 1–34 the composition is skewed to polar residues; sequence MSPHQTTGQESDNMTVNGENAQASSQYIQSNEEM. The tract at residues 1-62 is disordered; the sequence is MSPHQTTGQE…PSRPKRKKAK (62 aa). Basic and acidic residues predominate over residues 40–55; sequence TEKKASTAKAAKDPSR. The segment at residues 65 to 93 is a DNA-binding region (zn(2)-C6 fungal-type); that stretch reads CYACQRGHLTCGDERPCQRCIKRGFQDAC. 5 disordered regions span residues 128–224, 263–300, 353–400, 533–567, and 635–666; these read QNNA…FNSA, GDTPPSESGAQRGSIGQNGSGTFGLTGSNFSESPSNQA, SPAS…TPQL, NHNVNTGGSSGLMTGSTSRGSYTPRPYSSEVYNSS, and GLNGEAASNETNELNGSLTNGATTNGRGQRRW. Polar residues-rich tracts occupy residues 133-213, 267-277, 287-300, and 361-379; these read GSNT…TPSA, PSESGAQRGSI, LTGSNFSESPSNQA, and MMTTSSATFEDTTNSGAFN. Composition is skewed to low complexity over residues 380–399 and 543–553; these read SRQNVPVSQQRQQPVVSTPQ and GLMTGSTSRGS. Residues 640-661 are compositionally biased toward polar residues; it reads AASNETNELNGSLTNGATTNGR.

Belongs to the ERT1/acuK family.

It localises to the nucleus. In terms of biological role, transcription factor which regulates nonfermentable carbon utilization. Activator of gluconeogenetic genes. The protein is Transcription activator of gluconeogenesis ARB_05058 of Arthroderma benhamiae (strain ATCC MYA-4681 / CBS 112371) (Trichophyton mentagrophytes).